Reading from the N-terminus, the 294-residue chain is Release factor glutamine methyltransferase (294 aa).

Residues 131 to 135 (GTGSG), Asp154, and Asn202 contribute to the S-adenosyl-L-methionine site. Residue 202–205 (NPPY) participates in substrate binding.

It belongs to the protein N5-glutamine methyltransferase family. PrmC subfamily.

It catalyses the reaction L-glutaminyl-[peptide chain release factor] + S-adenosyl-L-methionine = N(5)-methyl-L-glutaminyl-[peptide chain release factor] + S-adenosyl-L-homocysteine + H(+). Its function is as follows. Methylates the class 1 translation termination release factors RF1/PrfA and RF2/PrfB on the glutamine residue of the universally conserved GGQ motif. This is Release factor glutamine methyltransferase from Chlorobaculum tepidum (strain ATCC 49652 / DSM 12025 / NBRC 103806 / TLS) (Chlorobium tepidum).